The chain runs to 280 residues: uncharacterized protein (280 aa).

The region spanning 96–208 is the DUF1279 domain; the sequence is DKSIGIFQRF…GYLSTPPPVK (113 aa). A helical transmembrane segment spans residues 115–135; the sequence is VMVPVHIVTSTVWFGSFYYAA. The stretch at 207–274 forms a coiled coil; the sequence is VKEFLQDKME…KLQETKDKMS (68 aa). Positions 245-280 are disordered; sequence SERMEETKERFSETKDKFSEKLQETKDKMSFRKKAD.

The protein resides in the membrane. This is an uncharacterized protein from Danio rerio (Zebrafish).